Reading from the N-terminus, the 96-residue chain is Antitoxin TacA3 (96 aa).

The segment at 61–96 is neutralization domain; the sequence is YLTERDTKMIMEILDNPPAPNEKLLAAAFALPDMKK.

This sequence belongs to the TacA antitoxin family. As to quaternary structure, forms a complex with cognate toxin TacT3. Forms a 4:2 antitoxin:toxin complex with cognate toxin TacT3. Forms a 4:4 antitoxin:toxin complex with promoter DNA, where 2 TacT3 dimers bridge 2 TacA3 dimers. Only TacA3 contacts promoter DNA.

Functionally, antitoxin component of a type II toxin-antitoxin (TA) system. Counteracts the toxic effect of cognate toxin TacT3, but not TacT1 or TacT2. Plays a role in persister cell formation. The TacA3-TacT3 complex both represses and derepresses expression of its own operon. The hexameric 4:2 TacA3-TacT3 complex binds promoter DNA and represses its transcription; both subunits are required. The octomeric 4:4 TacA3-TacT3 complex derepresses the operon. The shift from hexameric to octomeric complex probably alters DNA-binding, leading to dissociation from the operator DNA and derepression. Does not bind the promoter of the TacA1-TacT1 operon. In Salmonella typhimurium (strain 14028s / SGSC 2262), this protein is Antitoxin TacA3.